Here is a 345-residue protein sequence, read N- to C-terminus: Platelet-derived growth factor C (345 aa).

The N-terminal stretch at 1–22 (MLLFGFLLLTFALVSQRQGAEA) is a signal peptide. Residues Asn-25 and Asn-55 are each glycosylated (N-linked (GlcNAc...) asparagine). The CUB domain occupies 46 to 163 (HEKIITVSAN…PGFCIHYTLL (118 aa)). 4 disulfides stabilise this stretch: Cys-104–Cys-124, Cys-250–Cys-294, Cys-280–Cys-335, and Cys-287–Cys-337.

This sequence belongs to the PDGF/VEGF growth factor family. As to quaternary structure, homodimer; disulfide-linked. Interacts with PDGFRA homodimers, and with heterodimers formed by PDGFRA and PDGFRB. Proteolytic removal of the N-terminal CUB domain releasing the core domain is necessary for unmasking the receptor-binding epitopes of the core domain. Cleavage after basic residues in the hinge region (region connecting the CUB and growth factor domains) gives rise to the receptor-binding form.

The protein resides in the secreted. Its function is as follows. Growth factor that plays an essential role in the regulation of embryonic development, cell proliferation, cell migration, survival and chemotaxis. Potent mitogen and chemoattractant for cells of mesenchymal origin. Required for normal skeleton formation during embryonic development. Required for normal skin morphogenesis during embryonic development. Plays an important role in wound healing, in angiogenesis and blood vessel development. This Gekko japonicus (Schlegel's Japanese gecko) protein is Platelet-derived growth factor C (PDGFC).